Here is a 344-residue protein sequence, read N- to C-terminus: MANPAPNLECRMYESRYPDVDMAVMIQVKTIADMGAYVSLLEYNNIEGMILFSELSRRRIRSISSLIKVGRTEPVMVLRVDRERGYIDLSKRRVSDEDKEACEERYNKSKLVHSIMRHVAETVGVDLEELYVNIGWPLYKKHGHAFEAFKIVVTDPDSVFDALTREVKETGPDGVEVTKVVPAVSEELKDAFLKDIRRRMTPQPMKIRADIELKCFQFDGVLHIKEAMKKAEAVGTDDCPVKIKLVAPPLYVLTTHTHYKEKGIVTLNKAIEACITAIEEHKGKLVVKEGARAVSERDDKLLAEHMAKLRMDNEEMSGDEGSEDEEEDTGMGEVDIDGGSGIIE.

In terms of domain architecture, S1 motif spans 21–92; the sequence is DMAVMIQVKT…ERGYIDLSKR (72 aa). Ser56 is subject to Phosphoserine; by GCN2. The tract at residues 309–344 is disordered; it reads LRMDNEEMSGDEGSEDEEEDTGMGEVDIDGGSGIIE. A compositionally biased stretch (acidic residues) spans 314–336; sequence EEMSGDEGSEDEEEDTGMGEVDI. A phosphoserine; by CK2 mark is found at Ser317 and Ser322.

The protein belongs to the eIF-2-alpha family. In terms of assembly, eukaryotic translation initiation factor 2 eIF2 is a heterotrimeric complex composed of an alpha, a beta and a gamma subunit. In terms of processing, phosphorylated at Ser-56 by GCN2. Phosphorylated at Ser-317 and Ser-322 by CK2.

It localises to the cytoplasm. The protein localises to the cytosol. Its function is as follows. Functions in the early steps of protein synthesis by forming a ternary complex with GTP and initiator tRNA. This complex binds to a 40S ribosomal subunit, followed by mRNA binding to form a 43S pre-initiation complex. Junction of the 60S ribosomal subunit to form the 80S initiation complex is preceded by hydrolysis of the GTP bound to eIF-2 and release of an eIF-2-GDP binary complex. In order for eIF-2 to recycle and catalyze another round of initiation, the GDP bound to eIF-2 must exchange with GTP by way of a reaction catalyzed by eIF2B. This is Eukaryotic translation initiation factor 2 subunit alpha from Arabidopsis thaliana (Mouse-ear cress).